Consider the following 1080-residue polypeptide: Carbamoyl phosphate synthase large chain (1080 aa).

Residues 1-403 (MPKRTDLETI…SLQKALRGLE (403 aa)) form a carboxyphosphate synthetic domain region. ATP is bound by residues Arg129, Arg169, Gly175, Gly176, Glu208, Val210, Glu215, Gly241, Val242, His243, Gln285, and Glu299. An ATP-grasp 1 domain is found at 133 to 328 (RVAMGEIGLD…IAKVAAKLAV (196 aa)). Residues Gln285, Glu299, and Asn301 each coordinate Mg(2+). Positions 285, 299, and 301 each coordinate Mn(2+). The oligomerization domain stretch occupies residues 404-554 (TGKIGLDPTG…YSTYEDECEA (151 aa)). Positions 555–942 (LPTDRDKIMI…AFARAQEAGG (388 aa)) are carbamoyl phosphate synthetic domain. One can recognise an ATP-grasp 2 domain in the interval 679–876 (QQLVDKLGLK…LAKIAARCMA (198 aa)). Arg715, Arg754, Leu756, Glu761, Gly787, Val788, His789, Ser790, Gln830, and Glu847 together coordinate ATP. Positions 830, 847, and 849 each coordinate Mg(2+). Residues Gln830, Glu847, and Asn849 each contribute to the Mn(2+) site. An MGS-like domain is found at 943–1080 (IKAPPLGKAF…LQELHKELEA (138 aa)). An allosteric domain region spans residues 943–1080 (IKAPPLGKAF…LQELHKELEA (138 aa)).

This sequence belongs to the CarB family. As to quaternary structure, composed of two chains; the small (or glutamine) chain promotes the hydrolysis of glutamine to ammonia, which is used by the large (or ammonia) chain to synthesize carbamoyl phosphate. Tetramer of heterodimers (alpha,beta)4. Requires Mg(2+) as cofactor. It depends on Mn(2+) as a cofactor.

The enzyme catalyses hydrogencarbonate + L-glutamine + 2 ATP + H2O = carbamoyl phosphate + L-glutamate + 2 ADP + phosphate + 2 H(+). It carries out the reaction hydrogencarbonate + NH4(+) + 2 ATP = carbamoyl phosphate + 2 ADP + phosphate + 2 H(+). Its pathway is amino-acid biosynthesis; L-arginine biosynthesis; carbamoyl phosphate from bicarbonate: step 1/1. The protein operates within pyrimidine metabolism; UMP biosynthesis via de novo pathway; (S)-dihydroorotate from bicarbonate: step 1/3. Functionally, large subunit of the glutamine-dependent carbamoyl phosphate synthetase (CPSase). CPSase catalyzes the formation of carbamoyl phosphate from the ammonia moiety of glutamine, carbonate, and phosphate donated by ATP, constituting the first step of 2 biosynthetic pathways, one leading to arginine and/or urea and the other to pyrimidine nucleotides. The large subunit (synthetase) binds the substrates ammonia (free or transferred from glutamine from the small subunit), hydrogencarbonate and ATP and carries out an ATP-coupled ligase reaction, activating hydrogencarbonate by forming carboxy phosphate which reacts with ammonia to form carbamoyl phosphate. In Xanthomonas axonopodis pv. citri (strain 306), this protein is Carbamoyl phosphate synthase large chain.